We begin with the raw amino-acid sequence, 318 residues long: GTP cyclohydrolase MptA (318 aa).

This sequence belongs to the GTP cyclohydrolase IV family. In terms of assembly, homodimer. Fe(2+) serves as cofactor.

The catalysed reaction is GTP + H2O = 7,8-dihydroneopterin 2',3'-cyclic phosphate + formate + diphosphate + H(+). The protein operates within cofactor biosynthesis; 5,6,7,8-tetrahydromethanopterin biosynthesis. Converts GTP to 7,8-dihydro-D-neopterin 2',3'-cyclic phosphate, the first intermediate in the biosynthesis of coenzyme methanopterin. The sequence is that of GTP cyclohydrolase MptA from Methanothermobacter thermautotrophicus (strain ATCC 29096 / DSM 1053 / JCM 10044 / NBRC 100330 / Delta H) (Methanobacterium thermoautotrophicum).